A 1178-amino-acid chain; its full sequence is Zinc finger CCHC domain-containing protein 2 (1178 aa).

4 disordered regions span residues 1–90, 207–249, 557–683, and 936–986; these read MLRM…GPSA, AARG…RVGG, VTSA…SVNQ, and LSTA…SDST. A compositionally biased stretch (pro residues) spans 43–67; it reads PPPPPPPPAGPSRGPLPPPPPPRGL. The segment covering 75-88 has biased composition (gly residues); the sequence is AAAGAGMPGGGGGP. Basic and acidic residues predominate over residues 208–219; that stretch reads ARGEGSRGGAED. A compositionally biased stretch (acidic residues) spans 220–229; sequence ERGEDGDGEQ. A Phosphoserine modification is found at Ser236. The segment covering 580–594 has biased composition (basic and acidic residues); sequence PQTEKEKIKKTDNRL. Positions 595–607 are enriched in polar residues; sequence NSRINGIRLSTPQ. The segment covering 632-641 has biased composition (low complexity); sequence SSESYSSPSS. Positions 642-661 are enriched in basic and acidic residues; it reads PRHDGRESFESEEEKDRDTD. Positions 665–683 are enriched in polar residues; it reads EDSGNPSTTRFTGYGSVNQ. The span at 937–948 shows a compositional bias: low complexity; that stretch reads STAATSPQPASA. Positions 959–973 are enriched in pro residues; sequence PAVPTHTPGPAPSPS. Residues 974-986 show a composition bias toward polar residues; it reads PALTHSTAQSDST. Residues 1131–1148 form a CCHC-type zinc finger; it reads VSCYNCGVSGHYAQDCKQ.

This Homo sapiens (Human) protein is Zinc finger CCHC domain-containing protein 2.